The chain runs to 370 residues: Putative agmatine deiminase (370 aa).

Cys-361 serves as the catalytic Amidino-cysteine intermediate.

This sequence belongs to the agmatine deiminase family.

The catalysed reaction is agmatine + H2O = N-carbamoylputrescine + NH4(+). In Shewanella putrefaciens (strain CN-32 / ATCC BAA-453), this protein is Putative agmatine deiminase.